The following is a 391-amino-acid chain: tRNA (cytosine(38)-C(5))-methyltransferase (391 aa).

The 388-residue stretch at 4 to 391 (LRVLELYSGV…VAKLIKILYE (388 aa)) folds into the SAM-dependent MTase C5-type domain. Residues 13-15 (VGG), aspartate 34, 57-58 (IE), and serine 76 each bind S-adenosyl-L-methionine. Cysteine 79 is an active-site residue. An S-adenosyl-L-methionine-binding site is contributed by serine 376.

This sequence belongs to the class I-like SAM-binding methyltransferase superfamily. C5-methyltransferase family. In terms of tissue distribution, ubiquitous. Higher expression in testis, ovary and thymus and at much lower levels in spleen, prostate, colon, small intestine, and peripheral blood leukocytes.

It localises to the cytoplasm. The enzyme catalyses cytidine(38) in tRNA + S-adenosyl-L-methionine = 5-methylcytidine(38) in tRNA + S-adenosyl-L-homocysteine + H(+). Functionally, specifically methylates cytosine 38 in the anticodon loop of tRNA(Asp). Has higher activity on tRNA(Asp) modified with queuosine at position 34. In Homo sapiens (Human), this protein is tRNA (cytosine(38)-C(5))-methyltransferase (TRDMT1).